The chain runs to 29 residues: Bacteriocin (29 aa).

The protein localises to the secreted. Has antibacterial activity against strains of L.monocytogenes, L.lactis, B.subtilis, S.typhi, S.aureus, C.perfringens, E.aerogenes and M.luteus but not against E.coli, S.sonnei, S.pneumoniae, S.faecalis, P.aeruginosa, K.pneumoniae or P.vulgaris. This Lactococcus lactis subsp. lactis (Streptococcus lactis) protein is Bacteriocin.